Reading from the N-terminus, the 367-residue chain is Tetraprenyl-beta-curcumene synthase (367 aa).

The protein belongs to the large terpene synthase family.

It carries out the reaction all-trans-heptaprenyl diphosphate = (R)-tetraprenyl-beta-curcumene + diphosphate. In terms of biological role, catalyzes the transformation of a linear C35 prenyl diphosphate chain to form tetraprenyl-beta-curcumene. This is Tetraprenyl-beta-curcumene synthase (ytpB) from Bacillus subtilis (strain 168).